The chain runs to 212 residues: UPF0502 protein ECA2523 (212 aa).

It belongs to the UPF0502 family.

The sequence is that of UPF0502 protein ECA2523 from Pectobacterium atrosepticum (strain SCRI 1043 / ATCC BAA-672) (Erwinia carotovora subsp. atroseptica).